The chain runs to 659 residues: uncharacterized protein (659 aa).

Positions 1–25 are cleaved as a signal peptide; that stretch reads MVKRRLSAFGNAFLIYFIIFRLCCC. Over 26–556 the chain is Lumenal; the sequence is SPQTSHWCKY…LYQESSFQKR (531 aa). N-linked (GlcNAc...) asparagine glycans are attached at residues Asn-94, Asn-111, Asn-128, and Asn-142. Positions 173–335 constitute an SUN domain; sequence AATIDSNIDE…SLLRVYGKTM (163 aa). N-linked (GlcNAc...) asparagine glycosylation is found at Asn-393 and Asn-415. Positions 417-445 are disordered; it reads TGKSESYPATSTRSFNDISPSSSSSYSTA. The segment covering 423-434 has biased composition (polar residues); that stretch reads YPATSTRSFNDI. Residues Asn-495 and Asn-504 are each glycosylated (N-linked (GlcNAc...) asparagine). Residues 557-574 form a helical membrane-spanning segment; it reads LLMLQLTVLIVLTVYMAV. Residues 575–659 lie on the Cytoplasmic side of the membrane; it reads SRLPENLPTT…IIHSRSHSVC (85 aa). Disordered regions lie at residues 580–603 and 632–659; these read NLPTTRSSSNNPIEASRPPFSRDE and KRDPNTSIRSIHEREQDKIIHSRSHSVC. Over residues 581 to 592 the composition is skewed to polar residues; sequence LPTTRSSSNNPI. A compositionally biased stretch (basic and acidic residues) spans 641–651; the sequence is SIHEREQDKII.

It belongs to the SLP1 family. In terms of assembly, interacts with EMP65.

It localises to the endoplasmic reticulum membrane. May be involved in membrane protein folding. This is an uncharacterized protein from Schizosaccharomyces pombe (strain 972 / ATCC 24843) (Fission yeast).